Here is a 307-residue protein sequence, read N- to C-terminus: Porphobilinogen deaminase (307 aa).

The residue at position 239 (Cys-239) is an S-(dipyrrolylmethanemethyl)cysteine.

This sequence belongs to the HMBS family. Monomer. Dipyrromethane is required as a cofactor.

The catalysed reaction is 4 porphobilinogen + H2O = hydroxymethylbilane + 4 NH4(+). Its pathway is porphyrin-containing compound metabolism; protoporphyrin-IX biosynthesis; coproporphyrinogen-III from 5-aminolevulinate: step 2/4. Functionally, tetrapolymerization of the monopyrrole PBG into the hydroxymethylbilane pre-uroporphyrinogen in several discrete steps. This chain is Porphobilinogen deaminase, found in Campylobacter jejuni subsp. jejuni serotype O:6 (strain 81116 / NCTC 11828).